The following is a 247-amino-acid chain: DNA repair protein RecO (247 aa).

This sequence belongs to the RecO family.

In terms of biological role, involved in DNA repair and RecF pathway recombination. The sequence is that of DNA repair protein RecO from Methylocella silvestris (strain DSM 15510 / CIP 108128 / LMG 27833 / NCIMB 13906 / BL2).